The following is a 139-amino-acid chain: Gas vesicle protein A (139 aa).

Positions 113–139 (EKLGDMLTSDEPEPRKATRVRSRRADR) are disordered. The segment covering 129 to 139 (ATRVRSRRADR) has biased composition (basic residues).

This sequence belongs to the gas vesicle GvpA family. The gas vesicle shell is 2 nm thick and consists of a single layer of this protein. It forms helical ribs nearly perpendicular to the long axis of the vesicle.

It localises to the gas vesicle shell. In terms of biological role, gas vesicles are hollow, gas filled proteinaceous nanostructures found in some microorganisms. During planktonic growth they allow positioning of the organism at a favorable depth for light or nutrient acquisition. GvpA forms the protein shell. The protein is Gas vesicle protein A of Mycobacterium sp. (strain JLS).